A 198-amino-acid polypeptide reads, in one-letter code: Putative mycofactocin biosynthesis transcriptional regulator MftR (198 aa).

The region spanning 12–72 (STTPHHISDV…GDFSTHLAQL (61 aa)) is the HTH tetR-type domain. Positions 35 to 54 (SVDDIARAAGIARRTLFRYY) form a DNA-binding region, H-T-H motif.

In terms of biological role, may regulate a gene cluster involved in mycofactocin expression. Mycofactocin is a conserved polypeptide that might serve as an electron carrier. The chain is Putative mycofactocin biosynthesis transcriptional regulator MftR (mftR) from Mycobacterium tuberculosis (strain ATCC 25618 / H37Rv).